The sequence spans 101 residues: Small ribosomal subunit protein uS14 (101 aa).

The protein belongs to the universal ribosomal protein uS14 family. Part of the 30S ribosomal subunit. Contacts proteins S3 and S10.

Binds 16S rRNA, required for the assembly of 30S particles and may also be responsible for determining the conformation of the 16S rRNA at the A site. This Shewanella oneidensis (strain ATCC 700550 / JCM 31522 / CIP 106686 / LMG 19005 / NCIMB 14063 / MR-1) protein is Small ribosomal subunit protein uS14.